The chain runs to 115 residues: MVEYKQCIIIRDDLKLSKGKLAVQVAHAAVSAAEWASRSDLENWKEGGQKKVVLRVEKLQDLFELKEKARREGLSTALITDAGLTEIAPGTVTVLGIGPARADYIDKVTGNLKLV.

This sequence belongs to the PTH2 family.

The protein localises to the cytoplasm. It catalyses the reaction an N-acyl-L-alpha-aminoacyl-tRNA + H2O = an N-acyl-L-amino acid + a tRNA + H(+). In terms of biological role, the natural substrate for this enzyme may be peptidyl-tRNAs which drop off the ribosome during protein synthesis. In Methanococcoides burtonii (strain DSM 6242 / NBRC 107633 / OCM 468 / ACE-M), this protein is Peptidyl-tRNA hydrolase.